A 459-amino-acid chain; its full sequence is Cysteine--tRNA ligase (459 aa).

Cysteine 28 provides a ligand contact to Zn(2+). Positions 30 to 40 (ITIYDLCHIGH) match the 'HIGH' region motif. The Zn(2+) site is built by cysteine 209, histidine 234, and glutamate 238. The 'KMSKS' region motif lies at 266 to 270 (KMSKS). Residue lysine 269 participates in ATP binding.

This sequence belongs to the class-I aminoacyl-tRNA synthetase family. As to quaternary structure, monomer. Zn(2+) is required as a cofactor.

It is found in the cytoplasm. The catalysed reaction is tRNA(Cys) + L-cysteine + ATP = L-cysteinyl-tRNA(Cys) + AMP + diphosphate. This is Cysteine--tRNA ligase from Shewanella sediminis (strain HAW-EB3).